A 148-amino-acid chain; its full sequence is MNLLLLNGPNLNLLGKREPSIYGSQSLESIEISLSQRAKEEGVGLECFQSNSEGTLVDYIHQSIGKVDAILINAGAYTHTSIALRDALLSAEIPYVELHLSNTYARETFRQKSLLADRAIGVVSGFGVMSYQLAFQGILDYLRNRSKE.

Tyr22 acts as the Proton acceptor in catalysis. The substrate site is built by Asn73, His79, and Asp86. The active-site Proton donor is His99. Residues 100–101 (LS) and Arg110 each bind substrate.

The protein belongs to the type-II 3-dehydroquinase family. Homododecamer.

The enzyme catalyses 3-dehydroquinate = 3-dehydroshikimate + H2O. The protein operates within metabolic intermediate biosynthesis; chorismate biosynthesis; chorismate from D-erythrose 4-phosphate and phosphoenolpyruvate: step 3/7. Its function is as follows. Catalyzes a trans-dehydration via an enolate intermediate. The chain is 3-dehydroquinate dehydratase from Prochlorococcus marinus (strain MIT 9211).